We begin with the raw amino-acid sequence, 555 residues long: 2-succinyl-5-enolpyruvyl-6-hydroxy-3-cyclohexene-1-carboxylate synthase (555 aa).

It belongs to the TPP enzyme family. MenD subfamily. In terms of assembly, homodimer. Mg(2+) serves as cofactor. Mn(2+) is required as a cofactor. The cofactor is thiamine diphosphate.

The enzyme catalyses isochorismate + 2-oxoglutarate + H(+) = 5-enolpyruvoyl-6-hydroxy-2-succinyl-cyclohex-3-ene-1-carboxylate + CO2. It functions in the pathway quinol/quinone metabolism; 1,4-dihydroxy-2-naphthoate biosynthesis; 1,4-dihydroxy-2-naphthoate from chorismate: step 2/7. The protein operates within quinol/quinone metabolism; menaquinone biosynthesis. Functionally, catalyzes the thiamine diphosphate-dependent decarboxylation of 2-oxoglutarate and the subsequent addition of the resulting succinic semialdehyde-thiamine pyrophosphate anion to isochorismate to yield 2-succinyl-5-enolpyruvyl-6-hydroxy-3-cyclohexene-1-carboxylate (SEPHCHC). This is 2-succinyl-5-enolpyruvyl-6-hydroxy-3-cyclohexene-1-carboxylate synthase from Cronobacter sakazakii (strain ATCC BAA-894) (Enterobacter sakazakii).